A 455-amino-acid chain; its full sequence is ATP-dependent protease ATPase subunit HslU (455 aa).

Residues valine 23, 65 to 70, aspartate 266, glutamate 333, and arginine 405 each bind ATP; that span reads GVGKTE.

The protein belongs to the ClpX chaperone family. HslU subfamily. In terms of assembly, a double ring-shaped homohexamer of HslV is capped on each side by a ring-shaped HslU homohexamer. The assembly of the HslU/HslV complex is dependent on binding of ATP.

The protein resides in the cytoplasm. Functionally, ATPase subunit of a proteasome-like degradation complex; this subunit has chaperone activity. The binding of ATP and its subsequent hydrolysis by HslU are essential for unfolding of protein substrates subsequently hydrolyzed by HslV. HslU recognizes the N-terminal part of its protein substrates and unfolds these before they are guided to HslV for hydrolysis. This is ATP-dependent protease ATPase subunit HslU from Xanthomonas axonopodis pv. citri (strain 306).